A 238-amino-acid chain; its full sequence is Sugar fermentation stimulation protein homolog (238 aa).

It belongs to the SfsA family.

This Histophilus somni (strain 129Pt) (Haemophilus somnus) protein is Sugar fermentation stimulation protein homolog.